Here is a 1218-residue protein sequence, read N- to C-terminus: Protein jagged-1 (1218 aa).

Positions 1–33 (MRSPRTRGRPGRPLSLLLALLCALRAKVCGASG) are cleaved as a signal peptide. At 34–1067 (QFELEILSMQ…QRRPLKNRTD (1034 aa)) the chain is on the extracellular side. An N-linked (GlcNAc...) asparagine glycan is attached at N143. Residues 185 to 229 (VTCDDHYYGFGCNKFCRPRDDFFGHYACDQNGNKTCMEGWMGPDC) enclose the DSL domain. 2 cysteine pairs are disulfide-bonded: C187–C196 and C200–C212. The segment at 199 to 207 (FCRPRDDFF) is important for interaction with NOTCH1. The N-linked (GlcNAc...) asparagine glycan is linked to N217. 40 disulfides stabilise this stretch: C220/C229, C234/C245, C238/C251, C253/C262, C265/C276, C271/C282, C284/C293, C300/C312, C306/C322, C324/C333, C340/C351, C345/C360, C362/C371, C378/C389, C383/C398, C400/C409, C416/C427, C421/C436, C438/C447, C454/C464, C458/C473, C475/C484, C491/C502, C496/C511, C513/C522, C529/C540, C534/C549, C551/C560, C578/C605, C599/C615, C617/C626, C633/C644, C638/C653, C655/C664, C671/C682, C676/C691, C693/C702, C709/C720, C714/C729, and C731/C740. Residues 230–263 (NKAICRQGCSPKHGSCKLPGDCRCQYGWQGLYCD) enclose the EGF-like 1 domain. Residues 264 to 294 (KCIPHPGCVHGTCNEPWQCLCETNWGGQLCD) enclose the EGF-like 2; atypical domain. EGF-like domains follow at residues 296–334 (DLNY…PNCE) and 336–372 (AEHA…PTCS). In terms of domain architecture, EGF-like 5; calcium-binding spans 374–410 (NIDDCSPNNCSHGGTCQDLVNGFKCVCPPQWTGKTCQ). N382 carries an N-linked (GlcNAc...) asparagine glycan. The EGF-like 6; calcium-binding domain occupies 412–448 (DANECEAKPCVNARSCKNLIASYYCDCLPGWMGQNCD). The 36-residue stretch at 450–485 (NINDCLGQCQNDASCRDLVNGYRCICPPGYAGDHCE) folds into the EGF-like 7; calcium-binding domain. Residues 487-523 (DIDECASNPCLNGGHCQNEINRFQCLCPTGFSGNLCQ) enclose the EGF-like 8; calcium-binding domain. EGF-like domains lie at 525-561 (DIDY…KNCS) and 586-627 (DTPE…TYCH). N559 carries N-linked (GlcNAc...) asparagine glycosylation. The 37-residue stretch at 629–665 (NINDCESNPCKNGGTCIDGVNSYKCICSDGWEGAHCE) folds into the EGF-like 11; calcium-binding domain. One can recognise an EGF-like 12; calcium-binding domain in the interval 667–703 (NINDCSQNPCHYGGTCRDLVNDFYCDCKNGWKGKTCH). 2 consecutive EGF-like domains span residues 705 to 741 (RDSQ…TTCN) and 744 to 780 (RNSS…PICT). Residue N745 is glycosylated (N-linked (GlcNAc...) asparagine). Cystine bridges form between C748-C759, C753-C768, C770-C779, C786-C797, C791-C806, C808-C817, C824-C835, C829-C844, and C846-C855. The EGF-like 15; calcium-binding domain occupies 782–818 (NTNDCSPHPCYNSGTCVDGDNWYRCECAPGFAGPDCR). One can recognise an EGF-like 16; calcium-binding domain in the interval 820-856 (NINECQSSPCAFGATCVDEINGYQCICPPGHSGAKCH). N960, N991, N1045, and N1064 each carry an N-linked (GlcNAc...) asparagine glycan. A helical transmembrane segment spans residues 1068-1093 (FLVPLLSSVLTVAWVCCLVTAFYWCV). Topologically, residues 1094–1218 (RKRRKPSSHT…QSLNRMEYIV (125 aa)) are cytoplasmic. The interval 1181–1218 (REEKAPSGTPTKHPNWTNKQDNRDLESAQSLNRMEYIV) is disordered. Positions 1188–1199 (GTPTKHPNWTNK) are enriched in polar residues.

In terms of assembly, interacts with NOTCH1, NOTCH2 and NOTCH3. As to expression, widely expressed in many tissues, with highest expression in brain, heart, muscle and thymus.

It localises to the membrane. The protein localises to the cell membrane. Functionally, ligand for multiple Notch receptors and involved in the mediation of Notch signaling. May be involved in cell-fate decisions during hematopoiesis. Seems to be involved in early and late stages of mammalian cardiovascular development. Inhibits myoblast differentiation. May regulate fibroblast growth factor-induced angiogenesis. This Mus musculus (Mouse) protein is Protein jagged-1 (Jag1).